The primary structure comprises 203 residues: Large ribosomal subunit protein uL13 (203 aa).

N-acetylalanine is present on A2. The residue at position 59 (R59) is a Citrulline. S77 bears the Phosphoserine mark. At R140 the chain carries Citrulline. An N6-acetyllysine modification is found at K191.

Belongs to the universal ribosomal protein uL13 family. As to quaternary structure, component of the 60S ribosome. Component of the GAIT complex. Interacts with EIF4G1. Phosphorylation at Ser-77 upon interferon-gamma treatment in monocytes involves a DAPK1-DAPK3 kinase cascade and is causing release from the ribosome, association with the GAIT complex and subsequent involvement in transcript-selective translation inhibition. Post-translationally, citrullinated by PADI4.

Its subcellular location is the cytoplasm. In terms of biological role, associated with ribosomes but is not required for canonical ribosome function and has extra-ribosomal functions. Component of the GAIT (gamma interferon-activated inhibitor of translation) complex which mediates interferon-gamma-induced transcript-selective translation inhibition in inflammation processes. Upon interferon-gamma activation and subsequent phosphorylation dissociates from the ribosome and assembles into the GAIT complex which binds to stem loop-containing GAIT elements in the 3'-UTR of diverse inflammatory mRNAs (such as ceruplasmin) and suppresses their translation. In the GAIT complex interacts with m7G cap-bound eIF4G at or near the eIF3-binding site and blocks the recruitment of the 43S ribosomal complex. Involved in methylation of rRNA. The chain is Large ribosomal subunit protein uL13 (RPL13A) from Oryctolagus cuniculus (Rabbit).